A 201-amino-acid polypeptide reads, in one-letter code: uncharacterized protein (201 aa).

A signal peptide spans 1–25 (MYRAGVTLLVVAVVSLGRWDVVTMA). Over 26–170 (AAIGIGWYEP…AYFRRSNHRA (145 aa)) the chain is Extracellular. N-linked (GlcNAc...) asparagine; by host glycans are attached at residues N46, N49, N55, N84, N95, N113, N122, N137, and N144. The helical transmembrane segment at 171–191 (FMIVILTQVVFVVFIINASFI) threads the bilayer. Residues 192–201 (WSWTFRRHKR) are Cytoplasmic-facing.

It belongs to the HHV-5 UL120 protein family.

The protein resides in the host membrane. This is an uncharacterized protein from Homo sapiens (Human).